The primary structure comprises 421 residues: Probable pectate lyase C (421 aa).

A signal peptide spans 1–19 (MQPLHTLLALLPLCRSTTA). N164 and N201 each carry an N-linked (GlcNAc...) asparagine glycan. Residue R204 is part of the active site. One can recognise an EF-hand domain in the interval 257-292 (NENFHGYVENNYYDPDQDGTLNGNELGVSSSNYGGM). Ca(2+)-binding residues include D270, D272, D274, T276, and E281. Residues 353–376 (DFGGVGDLDGGETPTDTDGDGIPD) form a disordered region. The span at 367 to 376 (TDTDGDGIPD) shows a compositional bias: acidic residues.

The protein belongs to the polysaccharide lyase 1 family. It depends on Ca(2+) as a cofactor.

The protein resides in the secreted. The enzyme catalyses Eliminative cleavage of (1-&gt;4)-alpha-D-galacturonan to give oligosaccharides with 4-deoxy-alpha-D-galact-4-enuronosyl groups at their non-reducing ends.. Functionally, pectinolytic enzyme consist of four classes of enzymes: pectin lyase, polygalacturonase, pectin methylesterase and rhamnogalacturonase. Among pectinolytic enzymes, pectin lyase is the most important in depolymerization of pectin, since it cleaves internal glycosidic bonds of highly methylated pectins. Favors pectate, the anion, over pectin, the methyl ester. The sequence is that of Probable pectate lyase C (plyC) from Emericella nidulans (strain FGSC A4 / ATCC 38163 / CBS 112.46 / NRRL 194 / M139) (Aspergillus nidulans).